The primary structure comprises 404 residues: Glycosyltransferase GlyB (404 aa).

Residues 1 to 267 (MNTKSIVFNA…ILLRKDIISR (267 aa)) are GT8 domain. UDP-binding positions include 9-14 (NADNDY) and 103-104 (DS). Residues aspartate 103, aspartate 105, and histidine 228 each contribute to the Mn(2+) site. 228 to 233 (HYTGVK) is a binding site for UDP.

The protein in the N-terminal section; belongs to the glycosyltransferase 8 family.

Functionally, may be involved in the polymorphic O-glycosylation of the serine-rich repeat protein PsrP. Has equal hydrolytic activity against both UDP-galactose and UDP-glucose; no glycosyltransferase activity has been seen with tested substrates. This Streptococcus pneumoniae serotype 4 (strain ATCC BAA-334 / TIGR4) protein is Glycosyltransferase GlyB.